The chain runs to 335 residues: MLGIWTLLPLVLTSVARLSSKSVNAQVTDINSKGLELRKTVTTVETQNLEGLHHDGQFCHKPCPPGERKARDCTVNGDEPDCVPCQEGKEYTDKAHFSSKCRRCRLCDEGHGLEVEINCTRTQNTKCRCKPNFFCNSTVCEHCDPCTKCEHGIIKECTLTSNTKCKEEGSRSNLGWLCLLLLPIPLIVWVKRKEVQKTCRKHRKENQGSHESPTLNPETVAINLSDVDLSKYITTIAGVMTLSQVKGFVRKNGVNEAKIDEIKNDNVQDTAEQKVQLLRNWHQLHGKKEAYDTLIKDLKKANLCTLAEKIQTIILKDITSDSENSNFRNEIQSLV.

The signal sequence occupies residues 1–25; it reads MLGIWTLLPLVLTSVARLSSKSVNA. At 26-173 the chain is on the extracellular side; sequence QVTDINSKGL…KCKEEGSRSN (148 aa). Thr-28 carries an O-linked (GalNAc...) threonine glycan. TNFR-Cys repeat units lie at residues 47-83, 84-127, and 128-166; these read QNLEGLHHDGQFCHKPCPPGERKARDCTVNGDEPDCV, PCQE…NTKC, and RCKPNFFCNSTVCEHCDPCTKCEHGIIKECTLTSNTKCK. 8 disulfides stabilise this stretch: Cys-59/Cys-73, Cys-63/Cys-82, Cys-85/Cys-101, Cys-104/Cys-119, Cys-107/Cys-127, Cys-129/Cys-143, Cys-146/Cys-157, and Cys-149/Cys-165. N-linked (GlcNAc...) asparagine glycosylation is found at Asn-118 and Asn-136. The helical transmembrane segment at 174–190 threads the bilayer; it reads LGWLCLLLLPIPLIVWV. The Cytoplasmic portion of the chain corresponds to 191-335; that stretch reads KRKEVQKTCR…NFRNEIQSLV (145 aa). Cys-199 carries S-palmitoyl cysteine lipidation. Ser-209 is subject to Phosphoserine. Residues 212–317 form an interaction with HIPK3 region; the sequence is SPTLNPETVA…EKIQTIILKD (106 aa). Phosphothreonine is present on Thr-214. Ser-225 is modified (phosphoserine). The interaction with CALM stretch occupies residues 230 to 254; sequence SKYITTIAGVMTLSQVKGFVRKNGV. A Death domain is found at 230–314; it reads SKYITTIAGV…TLAEKIQTII (85 aa). (Microbial infection) N-beta-linked (GlcNAc) arginine glycosylation is present at Arg-250.

As to quaternary structure, component of the death-induced signaling complex (DISC) composed of cell surface receptor FAS/CD95, adapter protein FADD and the CASP8 protease; recruitment of CASP8 to the complex is required for processing of CASP8 into the p18 and p10 subunits. Interacts directly (via DED domain) with NOL3 (via CARD domain); inhibits death-inducing signaling complex (DISC) assembly by inhibiting the increase in FAS-FADD binding induced by FAS activation. Binds DAXX. Interacts with HIPK3. Part of a complex containing HIPK3 and FADD. Binds RIPK1 and FAIM2. Interacts with BABAM2 and FEM1B. Interacts with CALM. In the absence of stimulation, interacts with BIRC2, DDX3X and GSK3B. The interaction with BIRC2 and DDX3X is further enhanced upon receptor stimulation and accompanied by DDX3X and BIRC2 cleavage. In terms of processing, (Microbial infection) Glycosylated at Arg-250 by enteropathogenic E.coli protein NleB1: arginine GlcNAcylation prevents homotypic/heterotypic death domain interactions. Post-translationally, palmitoylated. Palmitoylation by ZDHHC7 prevents the lysosomal degradation of FAS regulating its expression at the plasma membrane. N- and O-glycosylated. O-glycosylated with core 1 or possibly core 8 glycans. Isoform 1 and isoform 6 are expressed at equal levels in resting peripheral blood mononuclear cells. After activation there is an increase in isoform 1 and decrease in the levels of isoform 6.

The protein localises to the cell membrane. It localises to the membrane raft. The protein resides in the secreted. In terms of biological role, receptor for TNFSF6/FASLG. The adapter molecule FADD recruits caspase CASP8 to the activated receptor. The resulting death-inducing signaling complex (DISC) performs CASP8 proteolytic activation which initiates the subsequent cascade of caspases (aspartate-specific cysteine proteases) mediating apoptosis. FAS-mediated apoptosis may have a role in the induction of peripheral tolerance, in the antigen-stimulated suicide of mature T-cells, or both. The secreted isoforms 2 to 6 block apoptosis (in vitro). The chain is Tumor necrosis factor receptor superfamily member 6 (FAS) from Homo sapiens (Human).